We begin with the raw amino-acid sequence, 1226 residues long: DNA-directed RNA polymerase subunit beta (1226 aa).

Belongs to the RNA polymerase beta chain family. In terms of assembly, the RNAP catalytic core consists of 2 alpha, 1 beta, 1 beta' and 1 omega subunit. When a sigma factor is associated with the core the holoenzyme is formed, which can initiate transcription.

The enzyme catalyses RNA(n) + a ribonucleoside 5'-triphosphate = RNA(n+1) + diphosphate. Its function is as follows. DNA-dependent RNA polymerase catalyzes the transcription of DNA into RNA using the four ribonucleoside triphosphates as substrates. This Leptospira borgpetersenii serovar Hardjo-bovis (strain JB197) protein is DNA-directed RNA polymerase subunit beta.